The following is a 111-amino-acid chain: Large ribosomal subunit protein P1 (111 aa).

The disordered stretch occupies residues 84–111 (PAEAAAAEEKKEEEKEESDEDMGFGLFD).

The protein belongs to the eukaryotic ribosomal protein P1/P2 family. In terms of assembly, P1 and P2 exist as dimers at the large ribosomal subunit. In terms of processing, phosphorylated.

Functionally, plays an important role in the elongation step of protein synthesis. This Aspergillus fumigatus (strain ATCC MYA-4609 / CBS 101355 / FGSC A1100 / Af293) (Neosartorya fumigata) protein is Large ribosomal subunit protein P1.